A 339-amino-acid chain; its full sequence is NADH-quinone oxidoreductase subunit H (339 aa).

A run of 9 helical transmembrane segments spans residues 9 to 29, 50 to 70, 82 to 102, 115 to 135, 161 to 181, 187 to 207, 235 to 255, 275 to 295, and 311 to 331; these read IFPLIIIALKVVAITTPLILC, PNVVGPFGLLQPIADAVKLLF, ILFILAPMITFILSLIGWAVI, VGVLYILAISSLSVYGIIIAG, MGLVIITVLLTTGTLNLSEII, MPWWIDLMLLPMGVVFFISVL, MGFALFFLGEYANMILVSAMT, IPGFFWFVFKVGFLLFCFLWI, and GWKVFLPLTLFWVVLVSSVLV.

This sequence belongs to the complex I subunit 1 family. As to quaternary structure, NDH-1 is composed of 14 different subunits. Subunits NuoA, H, J, K, L, M, N constitute the membrane sector of the complex.

Its subcellular location is the cell inner membrane. It catalyses the reaction a quinone + NADH + 5 H(+)(in) = a quinol + NAD(+) + 4 H(+)(out). Its function is as follows. NDH-1 shuttles electrons from NADH, via FMN and iron-sulfur (Fe-S) centers, to quinones in the respiratory chain. The immediate electron acceptor for the enzyme in this species is believed to be ubiquinone. Couples the redox reaction to proton translocation (for every two electrons transferred, four hydrogen ions are translocated across the cytoplasmic membrane), and thus conserves the redox energy in a proton gradient. This subunit may bind ubiquinone. This Rickettsia peacockii (strain Rustic) protein is NADH-quinone oxidoreductase subunit H.